The chain runs to 40 residues: Snaclec tokaracetin subunit beta (40 aa).

C2 and C13 are disulfide-bonded. The 32-residue stretch at 9–40 folds into the C-type lectin domain; it reads YDEHCYRVFQQKMNWEDAEKFCTQQHKGXHLX.

It belongs to the snaclec family. As to quaternary structure, heterodimer of subunits alpha and beta; disulfide-linked. Expressed by the venom gland.

Its subcellular location is the secreted. Platelet antagonist that specifically and reversibly binds to a site on platelet glycoprotein Ibalpha (GP1BA) close to or identical with the site for vWF binding. It inhibits the binding of vWF to platelets and vWF-dependent shear-induced platelet aggregation. The chain is Snaclec tokaracetin subunit beta from Protobothrops tokarensis (Tokara habu).